The following is a 489-amino-acid chain: Cytochrome P450 2C70 (489 aa).

An N-terminal signal peptide occupies residues 1–27 (MALFIFLGIWLSCLVFLFLWNQHHVRR). Cys-434 provides a ligand contact to heme.

It belongs to the cytochrome P450 family. The cofactor is heme.

The protein localises to the endoplasmic reticulum membrane. The protein resides in the microsome membrane. The enzyme catalyses chenodeoxycholate + reduced [NADPH--hemoprotein reductase] + O2 = alpha-muricholate + oxidized [NADPH--hemoprotein reductase] + H2O + H(+). It carries out the reaction ursodeoxycholate + reduced [NADPH--hemoprotein reductase] + O2 = beta-muricholate + oxidized [NADPH--hemoprotein reductase] + H2O + H(+). In terms of biological role, a cytochrome P450 monooxygenase involved in muricholic acid (MCA) synthesis. Hydroxylates at the 6-beta position two major bile acids, chenodeoxycholic acid (CDCA) and ursodeoxycholic acid (UDCA) to form alpha-MCA and beta-MCA, respectively. May regulate NR1H4/farnesoid X receptor signaling, as taurine-conjugated MCAs are antagonists of NR1H4. Mechanistically, uses molecular oxygen inserting one oxygen atom into a substrate, and reducing the second into a water molecule, with two electrons provided by NADPH via cytochrome P450 reductase (CPR; NADPH-ferrihemoprotein reductase). The polypeptide is Cytochrome P450 2C70 (Rattus norvegicus (Rat)).